The chain runs to 126 residues: Holo-[acyl-carrier-protein] synthase (126 aa).

Mg(2+) contacts are provided by Asp-9 and Glu-58.

This sequence belongs to the P-Pant transferase superfamily. AcpS family. It depends on Mg(2+) as a cofactor.

Its subcellular location is the cytoplasm. It carries out the reaction apo-[ACP] + CoA = holo-[ACP] + adenosine 3',5'-bisphosphate + H(+). Transfers the 4'-phosphopantetheine moiety from coenzyme A to a Ser of acyl-carrier-protein. The polypeptide is Holo-[acyl-carrier-protein] synthase (Escherichia fergusonii (strain ATCC 35469 / DSM 13698 / CCUG 18766 / IAM 14443 / JCM 21226 / LMG 7866 / NBRC 102419 / NCTC 12128 / CDC 0568-73)).